We begin with the raw amino-acid sequence, 115 residues long: Guanylin (115 aa).

The first 23 residues, 1-23 (MNAWLLSVLCLLGALAVLVEGVT), serve as a signal peptide directing secretion. Positions 24-100 (VQDGDLSFPL…LQRLEAIAQD (77 aa)) are excised as a propeptide. 3 cysteine pairs are disulfide-bonded: C69–C82, C104–C112, and C107–C115.

It belongs to the guanylin family. Intestine and in low abundance in adrenal gland, kidney, and uterus/oviduct.

It is found in the secreted. In terms of biological role, endogenous activator of intestinal guanylate cyclase. It stimulates this enzyme through the same receptor binding region as the heat-stable enterotoxins. In Rattus norvegicus (Rat), this protein is Guanylin (Guca2a).